Consider the following 88-residue polypeptide: Apolipoprotein C-I (88 aa).

The N-terminal stretch at 1–26 is a signal peptide; it reads MRLFLSLPVLVVVLAMVLEGPAPAQA.

Belongs to the apolipoprotein C1 family.

It is found in the secreted. Functionally, inhibitor of lipoprotein binding to the low density lipoprotein (LDL) receptor, LDL receptor-related protein, and very low density lipoprotein (VLDL) receptor. Associates with high density lipoproteins (HDL) and the triacylglycerol-rich lipoproteins in the plasma and makes up about 10% of the protein of the VLDL and 2% of that of HDL. Appears to interfere directly with fatty acid uptake and is also the major plasma inhibitor of cholesteryl ester transfer protein (CETP). Binds free fatty acids and reduces their intracellular esterification. Modulates the interaction of APOE with beta-migrating VLDL and inhibits binding of beta-VLDL to the LDL receptor-related protein. This is Apolipoprotein C-I (APOC1) from Ailurus fulgens (Himalayan red panda).